The following is a 95-amino-acid chain: Large ribosomal subunit protein uL23 (95 aa).

This sequence belongs to the universal ribosomal protein uL23 family. In terms of assembly, part of the 50S ribosomal subunit. Contacts protein L29, and trigger factor when it is bound to the ribosome.

In terms of biological role, one of the early assembly proteins it binds 23S rRNA. One of the proteins that surrounds the polypeptide exit tunnel on the outside of the ribosome. Forms the main docking site for trigger factor binding to the ribosome. The chain is Large ribosomal subunit protein uL23 from Pelotomaculum thermopropionicum (strain DSM 13744 / JCM 10971 / SI).